A 944-amino-acid chain; its full sequence is E3 ubiquitin-protein ligase JMJ24 (944 aa).

Disordered regions lie at residues 20-40 and 77-103; these read QTRS…GIPD and ANSA…YSEG. A WRC domain is found at 38-83; that stretch reads IPDDLRCKRSDGKQWRCTAMSMADKTVCEKHYIQAKKRAANSAFRA. The Nuclear localization signal 1 signature appears at 73 to 80; sequence KKRAANSA. A PHD-type; atypical zinc finger spans residues 217–269; it reads GEICHQCQRKDRERIISCLKCNQRAFCHNCLSARYSEISLEEVEKVCPACRGL. Zn(2+) is bound by residues cysteine 220, cysteine 223, cysteine 234, cysteine 237, cysteine 243, cysteine 246, cysteine 263, and cysteine 266. The Nuclear localization signal 2 signature appears at 323–330; the sequence is EKRLREVE. Residues 621-873 enclose the JmjC domain; sequence PRLGLLNVAA…ESARLAEEIR (253 aa). The segment covering 685–703 has biased composition (basic and acidic residues); the sequence is ERVRKTKPVPEEPDQKMSE. Residues 685–715 are disordered; sequence ERVRKTKPVPEEPDQKMSENESLLSPEQKLR.

Belongs to the JARID1 histone demethylase family. Homodimer. Interacts with RDR2. Binds to CMT3. Associates with the E2 ubiquitin-conjugating enzyme UBC10. Post-translationally, self-ubiquitinates. As to expression, expressed in inflorescences, flowers, roots, siliques, leaves and stems, especially in the vasculature (mainly phloem), with highest levels in floral organs.

Its subcellular location is the nucleus. The catalysed reaction is S-ubiquitinyl-[E2 ubiquitin-conjugating enzyme]-L-cysteine + [acceptor protein]-L-lysine = [E2 ubiquitin-conjugating enzyme]-L-cysteine + N(6)-ubiquitinyl-[acceptor protein]-L-lysine.. Binds histone H3 but seems to have lost demethylase activity probably due to its inability to bind iron Fe(2+). Possesses E3 ubiquitin ligase activity and targets directly CMT3 for proteasomal degradation to initiate destabilization of the heterochromatic state (e.g. CHG cytosine methylation and H3K9me2) of endogenous silenced loci. Required for the removal of repressive H3K9me2 histone marks to facilitate the transcription of AtSN1, AtMu1c, solo LTR and SDC, thus counteracting their transcriptional silencing. Mainly required to promote the basal level transcription of silenced loci such as TE and repeats targeted by RNA-dependent DNA methylation (RdDM) for silencing, a specialized branch of the RNA interference (RNAi) pathway. Also cooperates with RNAi pathways for gene silencing both by contributing to the production of 24-nt siRNA to initiate RdDM and by recruiting RDR2 to enable local transcripts to make dsRNA. Antagonizes histone H3K9 demethylase IBM1/JMJ25 function. The polypeptide is E3 ubiquitin-protein ligase JMJ24 (Arabidopsis thaliana (Mouse-ear cress)).